The chain runs to 759 residues: Phosphoribosylformylglycinamidine synthase subunit PurL (759 aa).

Residue His61 is part of the active site. ATP-binding residues include Tyr64 and Lys105. A Mg(2+)-binding site is contributed by Glu107. Substrate contacts are provided by residues 108 to 111 (SHNH) and Arg130. Residue His109 is the Proton acceptor of the active site. Residue Asp131 coordinates Mg(2+). Gln260 is a binding site for substrate. A Mg(2+)-binding site is contributed by Asp288. Residue 332–334 (ESQ) participates in substrate binding. 2 residues coordinate ATP: Asp520 and Gly557. Mg(2+) is bound at residue Asn558. Ser560 contributes to the substrate binding site.

Belongs to the FGAMS family. Monomer. Part of the FGAM synthase complex composed of 1 PurL, 1 PurQ and 2 PurS subunits.

Its subcellular location is the cytoplasm. It catalyses the reaction N(2)-formyl-N(1)-(5-phospho-beta-D-ribosyl)glycinamide + L-glutamine + ATP + H2O = 2-formamido-N(1)-(5-O-phospho-beta-D-ribosyl)acetamidine + L-glutamate + ADP + phosphate + H(+). The protein operates within purine metabolism; IMP biosynthesis via de novo pathway; 5-amino-1-(5-phospho-D-ribosyl)imidazole from N(2)-formyl-N(1)-(5-phospho-D-ribosyl)glycinamide: step 1/2. Its function is as follows. Part of the phosphoribosylformylglycinamidine synthase complex involved in the purines biosynthetic pathway. Catalyzes the ATP-dependent conversion of formylglycinamide ribonucleotide (FGAR) and glutamine to yield formylglycinamidine ribonucleotide (FGAM) and glutamate. The FGAM synthase complex is composed of three subunits. PurQ produces an ammonia molecule by converting glutamine to glutamate. PurL transfers the ammonia molecule to FGAR to form FGAM in an ATP-dependent manner. PurS interacts with PurQ and PurL and is thought to assist in the transfer of the ammonia molecule from PurQ to PurL. This is Phosphoribosylformylglycinamidine synthase subunit PurL from Thermoplasma volcanium (strain ATCC 51530 / DSM 4299 / JCM 9571 / NBRC 15438 / GSS1).